The primary structure comprises 264 residues: S-adenosylmethionine decarboxylase proenzyme (264 aa).

The active-site Schiff-base intermediate with substrate; via pyruvic acid is Ser112. Pyruvic acid (Ser); by autocatalysis is present on Ser112. The active-site Proton acceptor; for processing activity is His117. The Proton donor; for catalytic activity role is filled by Cys140.

It belongs to the prokaryotic AdoMetDC family. Type 2 subfamily. As to quaternary structure, heterooctamer of four alpha and four beta chains arranged as a tetramer of alpha/beta heterodimers. It depends on pyruvate as a cofactor. In terms of processing, is synthesized initially as an inactive proenzyme. Formation of the active enzyme involves a self-maturation process in which the active site pyruvoyl group is generated from an internal serine residue via an autocatalytic post-translational modification. Two non-identical subunits are generated from the proenzyme in this reaction, and the pyruvate is formed at the N-terminus of the alpha chain, which is derived from the carboxyl end of the proenzyme. The post-translation cleavage follows an unusual pathway, termed non-hydrolytic serinolysis, in which the side chain hydroxyl group of the serine supplies its oxygen atom to form the C-terminus of the beta chain, while the remainder of the serine residue undergoes an oxidative deamination to produce ammonia and the pyruvoyl group blocking the N-terminus of the alpha chain.

It carries out the reaction S-adenosyl-L-methionine + H(+) = S-adenosyl 3-(methylsulfanyl)propylamine + CO2. It participates in amine and polyamine biosynthesis; S-adenosylmethioninamine biosynthesis; S-adenosylmethioninamine from S-adenosyl-L-methionine: step 1/1. Its function is as follows. Catalyzes the decarboxylation of S-adenosylmethionine to S-adenosylmethioninamine (dcAdoMet), the propylamine donor required for the synthesis of the polyamines spermine and spermidine from the diamine putrescine. This is S-adenosylmethionine decarboxylase proenzyme from Salmonella gallinarum (strain 287/91 / NCTC 13346).